The chain runs to 202 residues: Dephospho-CoA kinase (202 aa).

Residues 3–202 enclose the DPCK domain; the sequence is TIGITGGIGS…TKRPNPPDRL (200 aa). An ATP-binding site is contributed by 11 to 16; sequence GSGKSV. The interval 138–161 is disordered; it reads RAMARDGSSAETMRQRMLSQEREQ.

The protein belongs to the CoaE family.

It localises to the cytoplasm. It carries out the reaction 3'-dephospho-CoA + ATP = ADP + CoA + H(+). It participates in cofactor biosynthesis; coenzyme A biosynthesis; CoA from (R)-pantothenate: step 5/5. Its function is as follows. Catalyzes the phosphorylation of the 3'-hydroxyl group of dephosphocoenzyme A to form coenzyme A. The polypeptide is Dephospho-CoA kinase (Porphyromonas gingivalis (strain ATCC BAA-308 / W83)).